A 208-amino-acid chain; its full sequence is Small ribosomal subunit protein uS4 (208 aa).

The segment at Gly24–Glu52 is disordered. Residues Ser98–Ala160 enclose the S4 RNA-binding domain.

It belongs to the universal ribosomal protein uS4 family. Part of the 30S ribosomal subunit. Contacts protein S5. The interaction surface between S4 and S5 is involved in control of translational fidelity.

Functionally, one of the primary rRNA binding proteins, it binds directly to 16S rRNA where it nucleates assembly of the body of the 30S subunit. In terms of biological role, with S5 and S12 plays an important role in translational accuracy. This Acinetobacter baumannii (strain ATCC 17978 / DSM 105126 / CIP 53.77 / LMG 1025 / NCDC KC755 / 5377) protein is Small ribosomal subunit protein uS4.